Here is a 277-residue protein sequence, read N- to C-terminus: Proteasome subunit beta type-7 (277 aa).

The propeptide at 1-43 (MAAVSVFQAPVGGFSFDNCRRNAVLEADFAKKGFKLPKARKTG) is removed in mature form. The active-site Nucleophile is the Thr-44.

This sequence belongs to the peptidase T1B family. The 26S proteasome consists of a 20S proteasome core and two 19S regulatory subunits. The 20S proteasome core is a barrel-shaped complex made of 28 subunits that are arranged in four stacked rings. The two outer rings are each formed by seven alpha subunits, and the two inner rings are formed by seven beta subunits. The proteolytic activity is exerted by three beta-subunits PSMB5, PSMB6 and PSMB7.

It localises to the cytoplasm. The protein resides in the nucleus. It catalyses the reaction Cleavage of peptide bonds with very broad specificity.. Its function is as follows. Component of the 20S core proteasome complex involved in the proteolytic degradation of most intracellular proteins. This complex plays numerous essential roles within the cell by associating with different regulatory particles. Associated with two 19S regulatory particles, forms the 26S proteasome and thus participates in the ATP-dependent degradation of ubiquitinated proteins. The 26S proteasome plays a key role in the maintenance of protein homeostasis by removing misfolded or damaged proteins that could impair cellular functions, and by removing proteins whose functions are no longer required. Associated with the PA200 or PA28, the 20S proteasome mediates ubiquitin-independent protein degradation. This type of proteolysis is required in several pathways including spermatogenesis (20S-PA200 complex) or generation of a subset of MHC class I-presented antigenic peptides (20S-PA28 complex). Within the 20S core complex, PSMB7 displays a trypsin-like activity. The protein is Proteasome subunit beta type-7 (Psmb7) of Rattus norvegicus (Rat).